The chain runs to 384 residues: Aryl-alcohol dehydrogenase GME11368 (384 aa).

An NADP(+)-binding site is contributed by aspartate 69. Tyrosine 74 acts as the Proton donor in catalysis. Residues 177–178 (SD), glutamine 203, and 301–309 (RKPEHLKAN) contribute to the NADP(+) site.

Belongs to the aldo/keto reductase family. Aldo/keto reductase 2 subfamily.

It functions in the pathway secondary metabolite biosynthesis. Its function is as follows. Aryl-alcohol dehydrogenase; part of the gene cluster that mediates the biosynthesis of dibenzodioxocinones such as pestalotiollide B, a novel class of inhibitors against cholesterol ester transfer protein (CEPT). The biosynthesis initiates from condensation of acetate and malonate units catalyzed by the non-reducing PKS pks8/GME11356. Pks8/GME11356 lacks a thioesterase (TE) domain, which is important to the cyclizing of the third ring of atrochrysone carboxylic acid, and the esterase GME11355 might play the role of TE and catalyzes the cyclization reaction of the C ring. The lactamase-like protein GME11357 (or other beta-lactamases in Pestalotiopsis microspora) probably hydrolyzes the thioester bond between the ACP of pks8/GME11356 and the intermediate to release atrochrysone carboxylic acid, which is spontaneously dehydrates to form endocrocin anthrone. Endocrocin anthrone is further converted to emodin via the endocrocin intermediate. Emodin is then oxidized by several enzymes such as the Baeyer-Villiger oxidase GME11358, the oxidoreductase GME11367, the short chain dehydrogenase/reductase GME11373, as well as by other oxidoreductases from the cluster, to modify the A and C rings and open the B ring, and finally yield monodictyphenone. The prenyltransferase GME11375 may catalyze the addition reaction between the C5 side chains and the carbon bone of dibenzodioxocinones. The remaining biochemical reactions to the final product dibenzodioxocinones should be methylation catalyzed by methyltransferase GME11366 and reduction and lactonization reaction catalyzed by a series of oxidordeuctases. This is Aryl-alcohol dehydrogenase GME11368 from Pestalotiopsis microspora.